A 105-amino-acid polypeptide reads, in one-letter code: Guanyl-specific ribonuclease Ms (105 aa).

2 cysteine pairs are disulfide-bonded: cysteine 3/cysteine 11 and cysteine 7/cysteine 102. The active site involves histidine 39. The active-site Proton acceptor is the glutamate 57. Residue histidine 91 is the Proton donor of the active site.

The protein belongs to the ribonuclease N1/T1 family.

It catalyses the reaction [RNA] containing guanosine + H2O = an [RNA fragment]-3'-guanosine-3'-phosphate + a 5'-hydroxy-ribonucleotide-3'-[RNA fragment].. This is Guanyl-specific ribonuclease Ms from Aspergillus phoenicis (Aspergillus saitoi).